The primary structure comprises 148 residues: UPF0756 membrane protein YeaL (148 aa).

The next 4 membrane-spanning stretches (helical) occupy residues 14–34 (ALGF…LIIV), 51–71 (LSIG…SGTL), 86–106 (LVAI…VTLM), and 121–141 (VLGV…AGLV).

It belongs to the UPF0756 family.

The protein localises to the cell membrane. This Escherichia coli (strain B / REL606) protein is UPF0756 membrane protein YeaL.